The primary structure comprises 427 residues: Adenylosuccinate synthetase (427 aa).

GTP contacts are provided by residues 12 to 18 (GDEGKGK) and 40 to 42 (GHT). Asp13 (proton acceptor) is an active-site residue. 2 residues coordinate Mg(2+): Asp13 and Gly40. Residues 13-16 (DEGK), 38-41 (NAGH), Thr128, Arg142, Gln223, Thr238, and Arg302 each bind IMP. His41 serves as the catalytic Proton donor. Position 298 to 304 (298 to 304 (TTTGRPR)) interacts with substrate. GTP-binding positions include Arg304, 330-332 (LLD), and 412-414 (SVG).

The protein belongs to the adenylosuccinate synthetase family. Homodimer. The cofactor is Mg(2+).

The protein localises to the cytoplasm. It catalyses the reaction IMP + L-aspartate + GTP = N(6)-(1,2-dicarboxyethyl)-AMP + GDP + phosphate + 2 H(+). The protein operates within purine metabolism; AMP biosynthesis via de novo pathway; AMP from IMP: step 1/2. Its function is as follows. Plays an important role in the de novo pathway of purine nucleotide biosynthesis. Catalyzes the first committed step in the biosynthesis of AMP from IMP. This chain is Adenylosuccinate synthetase, found in Alkaliphilus metalliredigens (strain QYMF).